The sequence spans 663 residues: DNA ligase 1 (663 aa).

NAD(+) is bound by residues 30 to 34 (DAEYD) and 78 to 79 (SL). Lys-105 functions as the N6-AMP-lysine intermediate in the catalytic mechanism. NAD(+) contacts are provided by Arg-126, Glu-161, and Lys-294. The Zn(2+) site is built by Cys-389, Cys-392, Cys-407, and Cys-412. One can recognise a BRCT domain in the interval 574–663 (AAGAPLAGKT…WAQLIEAKLV (90 aa)).

Belongs to the NAD-dependent DNA ligase family. LigA subfamily. Requires Mg(2+) as cofactor. It depends on Mn(2+) as a cofactor.

It catalyses the reaction NAD(+) + (deoxyribonucleotide)n-3'-hydroxyl + 5'-phospho-(deoxyribonucleotide)m = (deoxyribonucleotide)n+m + AMP + beta-nicotinamide D-nucleotide.. In terms of biological role, DNA ligase that catalyzes the formation of phosphodiester linkages between 5'-phosphoryl and 3'-hydroxyl groups in double-stranded DNA using NAD as a coenzyme and as the energy source for the reaction. It is essential for DNA replication and repair of damaged DNA. The sequence is that of DNA ligase 1 from Nocardia farcinica (strain IFM 10152).